Here is a 452-residue protein sequence, read N- to C-terminus: 23S rRNA (uracil(1939)-C(5))-methyltransferase RlmD (452 aa).

A TRAM domain is found at 1 to 57 (METEVNVAEISALDYEGRGVTKVGGKTVFIKGALPSERVGFRIVRQKKQFDEAEAVA). Cysteine 70, cysteine 76, cysteine 79, and cysteine 157 together coordinate [4Fe-4S] cluster. Residues glutamine 269, phenylalanine 298, asparagine 303, glutamate 319, asparagine 347, and aspartate 368 each coordinate S-adenosyl-L-methionine. Catalysis depends on cysteine 395, which acts as the Nucleophile.

The protein belongs to the class I-like SAM-binding methyltransferase superfamily. RNA M5U methyltransferase family. RlmD subfamily.

The catalysed reaction is uridine(1939) in 23S rRNA + S-adenosyl-L-methionine = 5-methyluridine(1939) in 23S rRNA + S-adenosyl-L-homocysteine + H(+). Functionally, catalyzes the formation of 5-methyl-uridine at position 1939 (m5U1939) in 23S rRNA. This chain is 23S rRNA (uracil(1939)-C(5))-methyltransferase RlmD, found in Neisseria lactamica (strain 020-06).